The sequence spans 233 residues: Orotidine 5'-phosphate decarboxylase (233 aa).

Substrate contacts are provided by residues Asp11, Lys34, 61 to 70, Thr117, Arg179, Gln189, Gly209, and Arg210; that span reads DLKLHDIPNT. Lys63 serves as the catalytic Proton donor.

The protein belongs to the OMP decarboxylase family. Type 1 subfamily. As to quaternary structure, homodimer.

It catalyses the reaction orotidine 5'-phosphate + H(+) = UMP + CO2. It functions in the pathway pyrimidine metabolism; UMP biosynthesis via de novo pathway; UMP from orotate: step 2/2. Functionally, catalyzes the decarboxylation of orotidine 5'-monophosphate (OMP) to uridine 5'-monophosphate (UMP). This Streptococcus agalactiae serotype V (strain ATCC BAA-611 / 2603 V/R) protein is Orotidine 5'-phosphate decarboxylase.